The sequence spans 262 residues: Ubiquinone biosynthesis protein COQ4, mitochondrial (262 aa).

Zn(2+) contacts are provided by H154, D155, H158, and E170. A disordered region spans residues 243–262 (LGIEQPPDLRQMKKDMAKKK). Positions 252 to 262 (RQMKKDMAKKK) are enriched in basic and acidic residues.

It belongs to the COQ4 family. Component of a multi-subunit COQ enzyme complex, composed of at least COQ3, COQ4, COQ5, COQ6, COQ7 and COQ9. Zn(2+) is required as a cofactor.

Its subcellular location is the mitochondrion inner membrane. It carries out the reaction a 4-hydroxy-3-methoxy-5-(all-trans-polyprenyl)benzoate + H(+) = a 2-methoxy-6-(all-trans-polyprenyl)phenol + CO2. It functions in the pathway cofactor biosynthesis; ubiquinone biosynthesis. In terms of biological role, lyase that catalyzes the C1-decarboxylation of 4-hydroxy-3-methoxy-5-(all-trans-polyprenyl)benzoic acid into 2-methoxy-6-(all-trans-polyprenyl)phenol during ubiquinone biosynthesis. This is Ubiquinone biosynthesis protein COQ4, mitochondrial from Yarrowia lipolytica (strain CLIB 122 / E 150) (Yeast).